The chain runs to 135 residues: Helix-loop-helix protein 2 (135 aa).

The interval 1 to 80 is disordered; sequence MMLSPDQAAD…RRRATAKYRS (80 aa). Over residues 10-21 the composition is skewed to basic and acidic residues; sequence DSDHPSSAHSDP. Positions 68–80 are enriched in basic residues; that stretch reads KRRRRRATAKYRS. The region spanning 77–129 is the bHLH domain; the sequence is KYRSAHATRERIRVEAFNLAFAELRKLLPTLPPDKKLSKIEILRLAICYISYL.

As to quaternary structure, homodimer. Interacts and may form heterodimers with STAT3.

Its subcellular location is the nucleus. Transcription factor which binds the E box motif 5'-CA[TC][AG]TG-3'. Involved in regulating energy expenditure, body mass, voluntary physical activity, mating behavior and reproductive longevity, acting through the hypothalamic-pituitary-gonadal axis. Acts as a transcriptional activator of target genes, including NDN, PCSK1, MC4R. Is also a transcriptional activator of KISS1. May act centrally to regulate function of both white and brown adipose tissue. Together with NHLH1, required to maintain migration and survival of cells in the anterior extramural migration stream (aes), which forms the precerebellar nuclei. Also, in concert with NHLH1, may determine fate of gonadotropin releasing hormone-1 (GnRH-1) neurons. The sequence is that of Helix-loop-helix protein 2 (NHLH2) from Homo sapiens (Human).